The chain runs to 117 residues: Large ribosomal subunit protein uL18 (117 aa).

It belongs to the universal ribosomal protein uL18 family. As to quaternary structure, part of the 50S ribosomal subunit; part of the 5S rRNA/L5/L18/L25 subcomplex. Contacts the 5S and 23S rRNAs.

Its function is as follows. This is one of the proteins that bind and probably mediate the attachment of the 5S RNA into the large ribosomal subunit, where it forms part of the central protuberance. In Sphingopyxis alaskensis (strain DSM 13593 / LMG 18877 / RB2256) (Sphingomonas alaskensis), this protein is Large ribosomal subunit protein uL18.